A 199-amino-acid chain; its full sequence is Patulin biosynthesis cluster protein F (199 aa).

The first 21 residues, 1–21 (MKSSLWVSLAVSLIGLGPAAA), serve as a signal peptide directing secretion. 2 N-linked (GlcNAc...) asparagine glycosylation sites follow: Asn129 and Asn183.

It belongs to the patF family.

It localises to the cytoplasm. It is found in the cytosol. The enzyme catalyses phyllostine = neopatulin. It participates in mycotoxin biosynthesis; patulin biosynthesis. Its function is as follows. Part of the gene cluster that mediates the biosynthesis of patulin, an acetate-derived tetraketide mycotoxin produced by several fungal species that shows antimicrobial properties against several bacteria. PatF catalyzes the conversion of phyllostine into neopatulin. The pathway begins with the synthesis of 6-methylsalicylic acid by the polyketide synthase (PKS) patK via condensation of acetate and malonate units. The 6-methylsalicylic acid decarboxylase patG then catalyzes the decarboxylation of 6-methylsalicylic acid to yield m-cresol (also known as 3-methylphenol). These first reactions occur in the cytosol. The intermediate m-cresol is then transported into the endoplasmic reticulum where the cytochrome P450 monooxygenase patH converts it to m-hydroxybenzyl alcohol, which is further converted to gentisyl alcohol by the cytochrome P450 monooxygenase patI. The oxidoreductases patJ and patO further convert gentisyl alcohol to isoepoxydon in the vacuole. PatN catalyzes then the transformation of isoepoxydon into phyllostine. The cluster protein patF is responsible for the conversion from phyllostine to neopatulin whereas the alcohol dehydrogenase patD converts neopatulin to E-ascladiol. The steps between isoepoxydon and E-ascladiol occur in the cytosol, and E-ascladiol is probably secreted to the extracellular space by one of the cluster-specific transporters patC or patM. Finally, the secreted patulin synthase patE catalyzes the conversion of E-ascladiol to patulin. The protein is Patulin biosynthesis cluster protein F of Penicillium expansum (Blue mold rot fungus).